The sequence spans 247 residues: Terpene cyclase adrI (247 aa).

A run of 5 helical transmembrane segments spans residues 20-40 (VAEF…FSML), 51-71 (TGIF…FIYP), 76-96 (HWEG…FFII), 112-132 (NLYF…YSFA), and 141-161 (FFYG…AQIL). Asparagine 164 carries N-linked (GlcNAc...) asparagine glycosylation. Helical transmembrane passes span 179-199 (FGGF…GPWF) and 205-225 (KFYI…YYVI).

The protein belongs to the paxB family.

The protein localises to the membrane. It functions in the pathway secondary metabolite biosynthesis; terpenoid biosynthesis. Terpene cyclase; part of the gene cluster that mediates the biosynthesis of andrastins, meroterpenoid compounds that exhibit inhibitory activity against ras farnesyltransferase, suggesting that they could be promising leads for antitumor agents. The first step of the pathway is the synthesis of 3,5-dimethylorsellinic acid (DMOA) by the polyketide synthase adrD via condensation of one acetyl-CoA starter unit with 3 malonyl-CoA units and 2 methylations. DMAO is then converted to farnesyl-DMAO by the prenyltransferase adrG. The methyltransferase adrK catalyzes the methylation of the carboxyl group of farnesyl-DMAO to farnesyl-DMAO methyl ester which is further converted to epoxyfarnesyl-DMAO methyl ester by the FAD-dependent monooxygenase adrH. The terpene cyclase adrI then catalyzes the carbon skeletal rearrangement to generate the andrastin E, the first compound in the pathway having the andrastin scaffold, with the tetracyclic ring system. The post-cyclization tailoring enzymes adrF, adrE, adrJ, and adrA, are involved in the conversion of andrastin E into andrastin A. The short chain dehydrogenase adrF is responsible for the oxidation of the C-3 a hydroxyl group of andrastin E to yield the corresponding ketone, andrastin D. The ketoreductase adrE stereoselectively reduces the carbonyl moiety to reverse the stereochemistry of the C-3 position to yield andrastin F. The acetyltransferase adrJ is the acetyltransferase that attaches the acetyl group to the C-3 hydroxyl group of andrastin F to yield andrastin C. Finally, the cytochrome P450 monooxygenase adrA catalyzes two sequential oxidation reactions of the C-23 methyl group, to generate the corresponding alcohol andrastin B, and aldehyde andrastin A. This chain is Terpene cyclase adrI, found in Penicillium rubens (strain ATCC 28089 / DSM 1075 / NRRL 1951 / Wisconsin 54-1255) (Penicillium chrysogenum).